Here is a 374-residue protein sequence, read N- to C-terminus: AA14 family lytic polysaccharide monooxygenase B (374 aa).

A signal peptide spans 1-18 (MIPVFLAAIAVFLPLTSG). Residues asparagine 31, asparagine 49, asparagine 94, and asparagine 151 are each glycosylated (N-linked (GlcNAc...) asparagine). Cystine bridges form between cysteine 85-cysteine 108, cysteine 127-cysteine 154, cysteine 171-cysteine 176, cysteine 178-cysteine 200, and cysteine 220-cysteine 236. N-linked (GlcNAc...) asparagine glycans are attached at residues asparagine 235 and asparagine 315. Residues 306–374 (ISNATPAPSN…TQSRKMRYVF (69 aa)) are disordered. Residues 313 to 344 (PSNGSCSSRPPSSPVSSSAASTTTSRSPRPSA) show a composition bias toward low complexity.

Belongs to the polysaccharide monooxygenase AA14 family. The cofactor is Cu(2+).

It is found in the secreted. In terms of biological role, lytic polysaccharide monooxygenase (LPMO) that oxidatively cleaves xylan with both C1 and C4 regioselectivity and that specifically targets the protective shield made by heteroxylans that cover cellulose microfibrils in wood. Catalysis by LPMOs requires the reduction of the active-site copper from Cu(II) to Cu(I) by a reducing agent and H(2)O(2) or O(2) as a cosubstrate. Cleavage occurs only when xylans are bound to cellulose and not when they are in solution. Increases the efficiency of wood saccharification through oxidative cleavage of highly refractory xylan-coated cellulose fibers via synergistic relationship with xylan-active enzymes, xylobiohydrolases and cellobiohydrolases. This is AA14 family lytic polysaccharide monooxygenase B from Pycnoporus cinnabarinus (Cinnabar-red polypore).